A 786-amino-acid polypeptide reads, in one-letter code: E3 ubiquitin-protein ligase UHRF1 (786 aa).

Residues 1 to 78 enclose the Ubiquitin-like domain; sequence MWIQVRTMDG…IQLLVRQSLV (78 aa). Phosphoserine is present on residues Ser76, Ser98, and Ser102. Positions 82–134 are disordered; that stretch reads PVPSSSGGSKERDSELSDTDSGCGLAQSESDKSSNSGEAANEPEGKADEDECD. Tudor-like regions lie at residues 139 to 213 and 220 to 287; these read GLYK…ARAR and DLQV…IERP. Lys283 participates in a covalent cross-link: Glycyl lysine isopeptide (Lys-Gly) (interchain with G-Cter in SUMO2). The tract at residues 300-305 is linker; that stretch reads RKSGPS. Ser302 bears the Phosphoserine; by PKA mark. A PHD-type zinc finger spans residues 303–370; it reads GPSCKHCKDD…EWYCPDCRID (68 aa). Histone H3R2me0 binding stretches follow at residues 337–341 and 357–359; these read CDECD and PPE. Position 372 is a phosphoserine (Ser372). Lys389 is covalently cross-linked (Glycyl lysine isopeptide (Lys-Gly) (interchain with G-Cter in SUMO2)). N6-acetyllysine is present on Lys403. Positions 423–586 constitute a YDG domain; it reads GPIPGIPVGT…FLVWRFLLRR (164 aa). The required to promote base flipping stretch occupies residues 449 to 450; the sequence is HV. Residues 467 to 468 and Asp473 contribute to the DNA site; that span reads AG. Required for formation of a 5-methylcytosine-binding pocket regions lie at residues 470–473 and 482–485; these read YEDD and YTGS. N6-acetyllysine; alternate is present on Lys550. Lys550 participates in a covalent cross-link: Glycyl lysine isopeptide (Lys-Gly) (interchain with G-Cter in SUMO2); alternate. The interval 626–679 is disordered; sequence NSKQAALDKEEEDGEEGFTSPRKGKRKSKSAGGDGSSRGTPKKTKVEPYSLTTQ. Ser645 bears the Phosphoserine; by CDK1 mark. Phosphoserine occurs at positions 655 and 662. A Glycyl lysine isopeptide (Lys-Gly) (interchain with G-Cter in SUMO2) cross-link involves residue Lys670. An RING-type zinc finger spans residues 717-756; the sequence is CICCQELVFRPITTVCQHNVCKDCLDRSFKAQVFSCPACR.

In terms of assembly, interacts with DNMT3A and DNMT3B. Interacts with DNMT1; the interaction is direct. Interacts with USP7; leading to its deubiquitination. Interacts with histone H3. Interacts with HDAC1, but not with HDAC2. Interacts with BLTP3A. Interacts with PML. Interacts with EHMT2. Binds methylated CpG containing oligonucleotides. Interacts with ZNF263; recruited to the SIX3 promoter along with other proteins involved in chromatin modification and transcriptional corepression where it contributes to transcriptional repression. Interacts with UHRF2. Interacts with FANCD2. Interacts with TET1 isoform 2; this interaction induces the recruitment of TET1 isoform 2 to replicating heterochromatin. In terms of processing, phosphorylation at Ser-302 of the linker region decreases the binding to H3K9me3. Phosphorylation at Ser-645 by CDK1 during M phase impairs interaction with USP7, preventing deubiquitination and leading to degradation by the proteasome. Ubiquitinated; which leads to proteasomal degradation. Autoubiquitinated; interaction with USP7 leads to deubiquitination and prevents degradation. Ubiquitination and degradation takes place during M phase, when phosphorylation at Ser-645 prevents interaction with USP7 and subsequent deubiquitination. Polyubiquitination may be stimulated by DNA damage.

The protein resides in the nucleus. The enzyme catalyses S-ubiquitinyl-[E2 ubiquitin-conjugating enzyme]-L-cysteine + [acceptor protein]-L-lysine = [E2 ubiquitin-conjugating enzyme]-L-cysteine + N(6)-ubiquitinyl-[acceptor protein]-L-lysine.. It participates in protein modification; protein ubiquitination. Its function is as follows. Multidomain protein that acts as a key epigenetic regulator by bridging DNA methylation and chromatin modification. Specifically recognizes and binds hemimethylated DNA at replication forks via its YDG domain and recruits DNMT1 methyltransferase to ensure faithful propagation of the DNA methylation patterns through DNA replication. In addition to its role in maintenance of DNA methylation, also plays a key role in chromatin modification: through its tudor-like regions and PHD-type zinc fingers, specifically recognizes and binds histone H3 trimethylated at 'Lys-9' (H3K9me3) and unmethylated at 'Arg-2' (H3R2me0), respectively, and recruits chromatin proteins. Enriched in pericentric heterochromatin where it recruits different chromatin modifiers required for this chromatin replication. Also localizes to euchromatic regions where it negatively regulates transcription possibly by impacting DNA methylation and histone modifications. Has E3 ubiquitin-protein ligase activity by mediating the ubiquitination of target proteins such as histone H3 and PML. It is still unclear how E3 ubiquitin-protein ligase activity is related to its role in chromatin in vivo. Plays a role in DNA repair by cooperating with UHRF2 to ensure recruitment of FANCD2 to interstrand cross-links (ICLs) leading to FANCD2 activation. Plays a pivotal role in the establishment of correct spindle architecture by catalyzing the 'Lys-63'-linked ubiquitination of KIF11, thereby controlling KIF11 localization on the spindle. In Bos taurus (Bovine), this protein is E3 ubiquitin-protein ligase UHRF1 (UHRF1).